A 312-amino-acid polypeptide reads, in one-letter code: Dihydroorotate dehydrogenase B (NAD(+)), catalytic subunit (312 aa).

FMN is bound by residues S23 and 47-48 (KA). Residues K47 and 71–75 (NAIGL) each bind substrate. FMN contacts are provided by N102 and N130. N130 is a binding site for substrate. Catalysis depends on C133, which acts as the Nucleophile. FMN is bound by residues K168 and I194. 195–196 (NT) contributes to the substrate binding site. FMN is bound by residues G220, 246–247 (GG), and 268–269 (GT).

The protein belongs to the dihydroorotate dehydrogenase family. Type 1 subfamily. As to quaternary structure, heterotetramer of 2 PyrK and 2 PyrD type B subunits. The cofactor is FMN.

The protein resides in the cytoplasm. It carries out the reaction (S)-dihydroorotate + NAD(+) = orotate + NADH + H(+). Its pathway is pyrimidine metabolism; UMP biosynthesis via de novo pathway; orotate from (S)-dihydroorotate (NAD(+) route): step 1/1. Catalyzes the conversion of dihydroorotate to orotate with NAD(+) as electron acceptor. This chain is Dihydroorotate dehydrogenase B (NAD(+)), catalytic subunit (pyrDB), found in Enterococcus faecalis (strain ATCC 47077 / OG1RF).